A 510-amino-acid polypeptide reads, in one-letter code: 2,3-bisphosphoglycerate-independent phosphoglycerate mutase (510 aa).

Mn(2+)-binding residues include Asp-15 and Ser-65. Ser-65 (phosphoserine intermediate) is an active-site residue. Residues His-126, Arg-155–Asp-156, Arg-187, Arg-193, Arg-259–Arg-262, and Lys-332 contribute to the substrate site. Residues Asp-399, His-403, Asp-440, His-441, and His-458 each coordinate Mn(2+).

It belongs to the BPG-independent phosphoglycerate mutase family. The cofactor is Mn(2+).

It localises to the plastid. The protein localises to the chloroplast. The enzyme catalyses (2R)-2-phosphoglycerate = (2R)-3-phosphoglycerate. It participates in carbohydrate degradation; glycolysis; pyruvate from D-glyceraldehyde 3-phosphate: step 3/5. Catalyzes the interconversion of 2-phosphoglycerate and 3-phosphoglycerate. This Antithamnion sp. (Red alga) protein is 2,3-bisphosphoglycerate-independent phosphoglycerate mutase.